A 32-amino-acid chain; its full sequence is Peptide tarsal-less AA (32 aa).

The interval 1 to 32 is disordered; sequence MLDPTGTYRRPRDTQDSRQKRRQDCLDPTGQY. Copy 1 of the repeat occupies 2–8; it reads LDPTGTY. The segment at 2–32 is 2 X 7 AA repeats of L-D-P-T-G-[TQ]-Y; it reads LDPTGTYRRPRDTQDSRQKRRQDCLDPTGQY. Residues 10-25 show a composition bias toward basic and acidic residues; the sequence is RPRDTQDSRQKRRQDC. Repeat unit 2 spans residues 26–32; that stretch reads LDPTGQY.

The protein localises to the cytoplasm. It localises to the nucleus. One of four peptides (tal-1A, tal-2A, tal-3A and tal-AA) produced from a polycistronic gene that function redundantly in several developmental processes. Required in early stages of leg development for the intercalation of the tarsal segments during the mid-third instar stage and later for tarsal joint formation. Promotes the post-translational modification of ovo isoform B (svb) into its active form which in turn initiates trichome development and promotes tarsal joint development. This is likely due to recruitment of the E3 ubiquitin-protein ligase Ubr3 to svb for ubiquitination of its N-terminus, converting svb into a transcriptional activator. Also enhances interaction of Ubr3 with Diap1. Required for correct wing and leg formation through its regulation of several genes including those in the Notch signaling pathway. Essential for denticle formation and may have a role in the developmental timing of trichome differentiation. Essential for the development of taenidial folds in the trachea. In Drosophila melanogaster (Fruit fly), this protein is Peptide tarsal-less AA.